Here is a 111-residue protein sequence, read N- to C-terminus: Cytochrome c (111 aa).

The residue at position 1 (Ala1) is an N-acetylalanine. 3 residues coordinate heme c: Cys22, Cys25, and His26. Lys80 carries the N6,N6,N6-trimethyllysine modification. Position 88 (Met88) interacts with heme c. An N6,N6,N6-trimethyllysine modification is found at Lys94.

Belongs to the cytochrome c family. Post-translationally, binds 1 heme c group covalently per subunit.

The protein localises to the mitochondrion intermembrane space. In terms of biological role, electron carrier protein. The oxidized form of the cytochrome c heme group can accept an electron from the heme group of the cytochrome c1 subunit of cytochrome reductase. Cytochrome c then transfers this electron to the cytochrome oxidase complex, the final protein carrier in the mitochondrial electron-transport chain. This is Cytochrome c from Nigella damascena (Love-in-a-mist).